A 159-amino-acid chain; its full sequence is Testis-specific XK-related protein, Y-linked (159 aa).

The next 3 membrane-spanning stretches (helical) occupy residues 1–21, 45–65, and 72–92; these read MFIFNSIADDIFPLISCVGAI, IYLMIWHSLVIISPVVTLAFF, and GSLHFLLIIYFVLLLTPWLEF.

Belongs to the XK family. Testis specific.

Its subcellular location is the membrane. This Homo sapiens (Human) protein is Testis-specific XK-related protein, Y-linked (XKRY).